The sequence spans 197 residues: Prefoldin subunit 3 (197 aa).

Residues 1–26 (MASLALRGSSENPAPTKDTTTNPRGI) are disordered. The segment covering 9–23 (SSENPAPTKDTTTNP) has biased composition (polar residues).

The protein belongs to the prefoldin subunit alpha family. As to quaternary structure, heterohexamer of two PFD-alpha type and four PFD-beta type subunits.

Its function is as follows. Prefoldin subunit; part of the gene cluster that mediates the biosynthesis of elsinochromes, pigments consisting of at least four interconvertible tautomers (A, B, C and D) that have a core phenolic quinone to which various side chains are attached and which play an important role in fungal pathogenesis. The non-reducing polyketide synthase PKS1 was proposed to iteratively catalyze decarboxylation between acetyl-CoA and malonyl-CoA subunits for polyketide chain elongation. The released polyketide undergoes cyclization to form an aromatic ring, and proceeds via serial modification steps to produce the heptaketide back- bone of elsinochrome. As elsinochrome has a symmetrical structure, two identical heptaketides are fused to form a core 1,2-dihydrobenzo-perylene ring structure, which can then be successively modified to produce the various derivatives of elsinochrome. Some of these reactions may be cooperatively carried out, at least in part, by the products of RDT1, OXR1 and PKS1. PRF1, embedded within the elsinochrome cluster possibly functions to stabilize some of the biosynthetic enzymes required for elsinochrome production. As prefoldin is a hexamer containing 2 a and 4 b subunits, additional prefoldin subunits, whose coding genes may not immediately link to the elsinochrome biosynthetic gene cluster, are required to fulfill the chaperone function. In addition, no methyltransferase-coding gene exists within the biosynthetic gene cluster, even though elsinochrome has four methyl groups at positions C3, C7, C8 and C12. Apparently, the identified gene cluster does not contain the entire entourage of genes responsible for elsinochrome biosynthesis. Once elsinochrome is synthesized, it must be exported outside the fungal cells, which is probably accomplished by the ECT1 transporter, to avoid toxicity. This is Prefoldin subunit 3 from Elsinoe fawcettii (Citrus scab fungus).